A 196-amino-acid chain; its full sequence is Molybdenum cofactor guanylyltransferase (196 aa).

Residues 10 to 12 (LAG), K23, N51, D69, and D99 each bind GTP. D99 is a Mg(2+) binding site.

This sequence belongs to the MobA family. In terms of assembly, monomer. Mg(2+) is required as a cofactor.

The protein resides in the cytoplasm. The enzyme catalyses Mo-molybdopterin + GTP + H(+) = Mo-molybdopterin guanine dinucleotide + diphosphate. In terms of biological role, transfers a GMP moiety from GTP to Mo-molybdopterin (Mo-MPT) cofactor (Moco or molybdenum cofactor) to form Mo-molybdopterin guanine dinucleotide (Mo-MGD) cofactor. This chain is Molybdenum cofactor guanylyltransferase, found in Shewanella woodyi (strain ATCC 51908 / MS32).